A 570-amino-acid polypeptide reads, in one-letter code: Zinc finger protein 76 (570 aa).

K24 participates in a covalent cross-link: Glycyl lysine isopeptide (Lys-Gly) (interchain with G-Cter in SUMO2). A run of 3 repeats spans residues 34–45 (IQLEDGTTAYIH), 62–73 (VQLEDGSMAYIH), and 88–99 (VQLEDGSTAYIH). Residues 34-99 (IQLEDGTTAY…LEDGSTAYIH (66 aa)) are 3 X 12 AA approximate repeats. 7 consecutive C2H2-type zinc fingers follow at residues 165-189 (FRCG…ERAH), 195-219 (YRCD…VRTH), 225-249 (YKCP…VRTH), 255-279 (FQCP…VRTH), 285-309 (YTCP…VRIH), 315-339 (YVCT…HVVH), and 345-368 (YTCS…RSAH). A disordered region spans residues 365 to 401 (RSAHGELEATEESEQALYEQQQLEAASAAEESPPPKR). Residues 379-395 (QALYEQQQLEAASAAEE) show a composition bias toward low complexity.

This sequence belongs to the krueppel C2H2-type zinc-finger protein family. As to expression, testis.

Its subcellular location is the nucleus. Its function is as follows. May be involved in transcriptional regulation. This chain is Zinc finger protein 76 (ZNF76), found in Homo sapiens (Human).